A 95-amino-acid polypeptide reads, in one-letter code: Large ribosomal subunit protein uL23 (95 aa).

Belongs to the universal ribosomal protein uL23 family. As to quaternary structure, part of the 50S ribosomal subunit. Contacts protein L29, and trigger factor when it is bound to the ribosome.

Functionally, one of the early assembly proteins it binds 23S rRNA. One of the proteins that surrounds the polypeptide exit tunnel on the outside of the ribosome. Forms the main docking site for trigger factor binding to the ribosome. This chain is Large ribosomal subunit protein uL23, found in Desulforudis audaxviator (strain MP104C).